Consider the following 227-residue polypeptide: uncharacterized protein (227 aa).

The protein localises to the virion. This is an uncharacterized protein from Acanthamoeba polyphaga (Amoeba).